The chain runs to 197 residues: 3-isopropylmalate dehydratase small subunit (197 aa).

The protein belongs to the LeuD family. LeuD type 1 subfamily. As to quaternary structure, heterodimer of LeuC and LeuD.

It catalyses the reaction (2R,3S)-3-isopropylmalate = (2S)-2-isopropylmalate. It functions in the pathway amino-acid biosynthesis; L-leucine biosynthesis; L-leucine from 3-methyl-2-oxobutanoate: step 2/4. Catalyzes the isomerization between 2-isopropylmalate and 3-isopropylmalate, via the formation of 2-isopropylmaleate. In Mycobacterium sp. (strain KMS), this protein is 3-isopropylmalate dehydratase small subunit.